We begin with the raw amino-acid sequence, 81 residues long: Cytochrome b559 subunit alpha (81 aa).

The heme site is built by Arg-18 and His-23. Residues 19-40 (YWVIHSITIPMLFIAGWLFVST) form a helical membrane-spanning segment.

Belongs to the PsbE/PsbF family. As to quaternary structure, heterodimer of an alpha subunit and a beta subunit. PSII is composed of 1 copy each of membrane proteins PsbA, PsbB, PsbC, PsbD, PsbE, PsbF, PsbH, PsbI, PsbJ, PsbK, PsbL, PsbM, PsbT, PsbX, PsbY, PsbZ, Psb30/Ycf12, peripheral proteins PsbO, CyanoQ (PsbQ), PsbU, PsbV and a large number of cofactors. It forms dimeric complexes. Requires heme b as cofactor.

It is found in the cellular thylakoid membrane. In terms of biological role, this b-type cytochrome is tightly associated with the reaction center of photosystem II (PSII). PSII is a light-driven water:plastoquinone oxidoreductase that uses light energy to abstract electrons from H(2)O, generating O(2) and a proton gradient subsequently used for ATP formation. It consists of a core antenna complex that captures photons, and an electron transfer chain that converts photonic excitation into a charge separation. This is Cytochrome b559 subunit alpha from Synechocystis sp. (strain ATCC 27184 / PCC 6803 / Kazusa).